Here is a 713-residue protein sequence, read N- to C-terminus: Protein argonaute (713 aa).

The N-terminal domain stretch occupies residues 18 to 129; that stretch reads EFIPKEVHFY…IKNIRKHKVV (112 aa). The 94-residue stretch at 164-257 folds into the PAZ domain; sequence HLWDFVNRDK…FAPQFCNLVF (94 aa). The interval 213 to 218 is binds 3'-end of gDNA; that stretch reads HIIKYY. Positions 346–488 are mid domain; that stretch reads DVPEIIRNKN…QIMGKLGIKY (143 aa). The Piwi domain maps to 426 to 699; the sequence is CFALIIGKEK…FVKALGKNWK (274 aa). A divalent metal cation contacts are provided by Gln457, Gln479, and Lys483. Positions 457 to 460 are binds 5'-phosphorylated end of gDNA; sequence QNIL. Active-site residues include Asp504, Glu541, and Asp570. Asp504 is a binding site for Mn(2+). Residue Asp570 participates in Mn(2+) binding. Binds 5'-phosphorylated end of gDNA regions lie at residues 625-632 and 678-679; these read HKTPFGSN and LR. Asp688 is a catalytic residue. Positions 688 and 713 each coordinate Mn(2+).

It belongs to the argonaute family. Long pAgo subfamily. It depends on a divalent metal cation as a cofactor.

Its activity is regulated as follows. DNA cleavage is inhibited by EDTA. Functionally, a DNA-guided ssDNA endonuclease that may play a role in defense against invading genetic elements. Uses short ssDNA sequences as guides (gDNA) to bind complementary target strands, resulting in slicing of the target DNA (tDNA). Endonucleolytically cleaves tDNA (the gDNA indicates where to cleave); two major and two minor products are seen which correspond to cleavage sites between nucleotides 9/10, 10/11, 13/14, and 14/15 downstream of the target residue base-paired with the 5'-end of the gDNA. Efficient guide-dependent tDNA cleavage requires a minimal length of 15 bp and is maximal at 19 bp. Prefers gDNA with 5'-phosphorylated purines and 3'-pyrimidines; changing these bases alters the cleavage activity and patterns. Also has guide-independent activity on tDNA called 'chopping'. Probably a first round of guide-independent activity on an invading plasmid or virus would generate guide DNAs for subsequent, more efficient, guide-dependent degradation of invading nucleic acids. Has no activity on substrate with a mismatch at positions 10 and 11, on ssDNA or RNA, nor on DNA:RNA hybrids. Digests longer (750 bp) dsDNA as well as circular plasmid and naked genomic DNA, but not chromatin, in a guide DNA-independent manner. Addition of endogenous histone A3 protects DNA from cleavage, while cleavage is insensitive to methylation. When plasmid encoding active or mutated protein (Ala-541) is transformed into Sulfolobus acidocaldarius about 25-fold fewer transformants are found with active protein; reduced levels of plasmid are found in wild-type transformed cells. While S.acidocaldarius grows at a similar temperature to M.jannaschii (70 to 80 degrees Celsius) it has very different histone-like proteins, which presumably do not protect against MjAgo. Binds ssDNA, dsDNA and DNA-RNA hybrids; binding is most efficient with dsDNA. This Methanocaldococcus jannaschii (strain ATCC 43067 / DSM 2661 / JAL-1 / JCM 10045 / NBRC 100440) (Methanococcus jannaschii) protein is Protein argonaute.